The sequence spans 216 residues: Pyrrolidone-carboxylate peptidase (216 aa).

Catalysis depends on residues Glu80, Cys143, and His168.

It belongs to the peptidase C15 family. As to quaternary structure, homotetramer.

The protein localises to the cytoplasm. The catalysed reaction is Release of an N-terminal pyroglutamyl group from a polypeptide, the second amino acid generally not being Pro.. Functionally, removes 5-oxoproline from various penultimate amino acid residues except L-proline. The polypeptide is Pyrrolidone-carboxylate peptidase (Cupriavidus necator (strain ATCC 17699 / DSM 428 / KCTC 22496 / NCIMB 10442 / H16 / Stanier 337) (Ralstonia eutropha)).